A 116-amino-acid polypeptide reads, in one-letter code: UPF0342 protein BH1149 (116 aa).

Belongs to the UPF0342 family.

The chain is UPF0342 protein BH1149 from Halalkalibacterium halodurans (strain ATCC BAA-125 / DSM 18197 / FERM 7344 / JCM 9153 / C-125) (Bacillus halodurans).